Consider the following 293-residue polypeptide: Methylsterol monooxygenase 1 (293 aa).

A run of 2 helical transmembrane segments spans residues 55 to 75 (LIVH…FQFI) and 100 to 120 (VLLF…YYFT). Residues 145-274 (CAVIEDTWHY…FTWWDRIFGT (130 aa)) enclose the Fatty acid hydroxylase domain. The Histidine box-1 signature appears at 157 to 161 (HRLLH). The Histidine box-2 signature appears at 170 to 174 (HKIHH). Residues 199–219 (FFIGIMLLCDHVILLWAWVTV) form a helical membrane-spanning segment. The short motif at 249–255 (HHDFHHM) is the Histidine box-3 element.

The protein belongs to the sterol desaturase family. It depends on Fe cation as a cofactor. Ubiquitinated by MARCHF6, leading to proteasomal degradation.

It localises to the endoplasmic reticulum membrane. The catalysed reaction is 4,4-dimethyl-5alpha-cholest-7-en-3beta-ol + 6 Fe(II)-[cytochrome b5] + 3 O2 + 5 H(+) = 4alpha-carboxy-4beta-methyl-5alpha-cholest-7-ene-3beta-ol + 6 Fe(III)-[cytochrome b5] + 4 H2O. It catalyses the reaction 4,4-dimethyl-5alpha-cholesta-8,24-dien-3beta-ol + 6 Fe(II)-[cytochrome b5] + 3 O2 + 5 H(+) = 4beta-methylzymosterol-4alpha-carboxylate + 6 Fe(III)-[cytochrome b5] + 4 H2O. It carries out the reaction 4alpha-methylzymosterol + 6 Fe(II)-[cytochrome b5] + 3 O2 + 5 H(+) = 4alpha-carboxyzymosterol + 6 Fe(III)-[cytochrome b5] + 4 H2O. The enzyme catalyses 4alpha-methyl-5alpha-cholest-7-en-3beta-ol + 6 Fe(II)-[cytochrome b5] + 3 O2 + 5 H(+) = 4alpha-carboxy-5alpha-cholest-7-en-3beta-ol + 6 Fe(III)-[cytochrome b5] + 4 H2O. The catalysed reaction is 4,4-dimethyl-5alpha-cholest-8-en-3beta-ol + 6 Fe(II)-[cytochrome b5] + 3 O2 + 5 H(+) = 4alpha-carboxy-4beta-methyl-5alpha-cholest-8-en-3beta-ol + 6 Fe(III)-[cytochrome b5] + 4 H2O. It catalyses the reaction 4alpha-methyl-5alpha-cholest-8-en-3beta-ol + 6 Fe(II)-[cytochrome b5] + 3 O2 + 5 H(+) = 4alpha-carboxy-5alpha-cholest-8-ene-3beta-ol + 6 Fe(III)-[cytochrome b5] + 4 H2O. Its pathway is steroid biosynthesis; zymosterol biosynthesis; zymosterol from lanosterol: step 3/6. It participates in steroid biosynthesis; cholesterol biosynthesis. Catalyzes the three-step monooxygenation required for the demethylation of 4,4-dimethyl and 4alpha-methylsterols, which can be subsequently metabolized to cholesterol. This is Methylsterol monooxygenase 1 (MSMO1) from Sus scrofa (Pig).